The sequence spans 350 residues: Solute carrier family 35 member E4 (350 aa).

Over residues 19 to 30 the composition is skewed to low complexity; it reads GAAAGGAQAAGP. The segment at 19–42 is disordered; it reads GAAAGGAQAAGPPEWPPGSPQALR. Transmembrane regions (helical) follow at residues 51 to 71, 73 to 93, 110 to 132, 135 to 155, 218 to 238, 258 to 278, 279 to 299, and 312 to 332; these read MAAL…KWIF, VHGF…AALA, VLLL…RAVP, LAQL…ALLL, VTLL…AALV, ILLS…LLAL, TSAL…LILS, and YVGI…EFVA. One can recognise an EamA domain in the interval 125-179; the sequence is NVGLRAVPLDLAQLVTTTTPLFTLALSALLLGRRHHPLQLAAMGPLCLGAACSLA.

This sequence belongs to the TPT transporter family. SLC35E subfamily.

The protein localises to the membrane. Functionally, putative transporter. The chain is Solute carrier family 35 member E4 (SLC35E4) from Homo sapiens (Human).